A 343-amino-acid chain; its full sequence is tRNA N6-adenosine threonylcarbamoyltransferase (343 aa).

Positions 111 and 115 each coordinate Fe cation. Substrate-binding positions include 134–138 (LVSGG), Asp-167, Gly-180, and Asn-276. Position 304 (Asp-304) interacts with Fe cation.

Belongs to the KAE1 / TsaD family. It depends on Fe(2+) as a cofactor.

Its subcellular location is the cytoplasm. The catalysed reaction is L-threonylcarbamoyladenylate + adenosine(37) in tRNA = N(6)-L-threonylcarbamoyladenosine(37) in tRNA + AMP + H(+). Its function is as follows. Required for the formation of a threonylcarbamoyl group on adenosine at position 37 (t(6)A37) in tRNAs that read codons beginning with adenine. Is involved in the transfer of the threonylcarbamoyl moiety of threonylcarbamoyl-AMP (TC-AMP) to the N6 group of A37, together with TsaE and TsaB. TsaD likely plays a direct catalytic role in this reaction. This Chromohalobacter salexigens (strain ATCC BAA-138 / DSM 3043 / CIP 106854 / NCIMB 13768 / 1H11) protein is tRNA N6-adenosine threonylcarbamoyltransferase.